A 161-amino-acid chain; its full sequence is Phosphopantetheine adenylyltransferase (161 aa).

Ser9 contributes to the substrate binding site. Residues 9 to 10 (SF) and His17 contribute to the ATP site. Substrate contacts are provided by Lys41, Leu73, and Lys87. ATP is bound by residues 88–90 (GLR), Glu98, and 122–128 (FSFLSSS).

It belongs to the bacterial CoaD family. In terms of assembly, homohexamer. Requires Mg(2+) as cofactor.

It localises to the cytoplasm. The enzyme catalyses (R)-4'-phosphopantetheine + ATP + H(+) = 3'-dephospho-CoA + diphosphate. It functions in the pathway cofactor biosynthesis; coenzyme A biosynthesis; CoA from (R)-pantothenate: step 4/5. Functionally, reversibly transfers an adenylyl group from ATP to 4'-phosphopantetheine, yielding dephospho-CoA (dPCoA) and pyrophosphate. This is Phosphopantetheine adenylyltransferase from Nocardia farcinica (strain IFM 10152).